We begin with the raw amino-acid sequence, 152 residues long: MLCPFCNHGELKVIDSRNSPEANAIKRRRECLRCSQRFTTFETVELTIQVLKRDGRYENFQEAKLINGLKAASSHTRIGQEQVQAIASNIKQDLLGKQNREISTKEIGELVMKYLKKADMIAYIRFACVYRRFRDVGELMEVLLSATPDGEK.

Residues 3–34 (CPFCNHGELKVIDSRNSPEANAIKRRRECLRC) fold into a zinc finger. Residues 48-138 (IQVLKRDGRY…VYRRFRDVGE (91 aa)) enclose the ATP-cone domain.

It belongs to the NrdR family. Zn(2+) serves as cofactor.

Functionally, negatively regulates transcription of bacterial ribonucleotide reductase nrd genes and operons by binding to NrdR-boxes. The sequence is that of Transcriptional repressor NrdR from Chlamydia muridarum (strain MoPn / Nigg).